We begin with the raw amino-acid sequence, 626 residues long: Chaperone protein HtpG (626 aa).

The segment at 1–341 (METKQFKAES…SEDLSLNISR (341 aa)) is a; substrate-binding. The tract at residues 342–552 (EILQHDRQLK…EGELSIEMEK (211 aa)) is b. The interval 553–626 (VLNAMPNNQN…FTNNICKIMK (74 aa)) is c.

Belongs to the heat shock protein 90 family. In terms of assembly, homodimer.

The protein localises to the cytoplasm. In terms of biological role, molecular chaperone. Has ATPase activity. The polypeptide is Chaperone protein HtpG (Clostridium botulinum (strain 657 / Type Ba4)).